A 360-amino-acid chain; its full sequence is Peptide chain release factor 1 (360 aa).

N5-methylglutamine is present on glutamine 235. The tract at residues 284–313 (AKRQQAEASTRRNLLGSGDRSDRNRTYNFP) is disordered.

Belongs to the prokaryotic/mitochondrial release factor family. Methylated by PrmC. Methylation increases the termination efficiency of RF1.

Its subcellular location is the cytoplasm. Its function is as follows. Peptide chain release factor 1 directs the termination of translation in response to the peptide chain termination codons UAG and UAA. In Salmonella schwarzengrund (strain CVM19633), this protein is Peptide chain release factor 1.